Here is a 258-residue protein sequence, read N- to C-terminus: Phosphate import ATP-binding protein PstB (258 aa).

Residues 12 to 253 (IQVHNLNFYY…PKMKQTEDYI (242 aa)) form the ABC transporter domain. 44-51 (GPSGCGKS) serves as a coordination point for ATP.

The protein belongs to the ABC transporter superfamily. Phosphate importer (TC 3.A.1.7) family. In terms of assembly, the complex is composed of two ATP-binding proteins (PstB), two transmembrane proteins (PstC and PstA) and a solute-binding protein (PstS).

Its subcellular location is the cell inner membrane. It catalyses the reaction phosphate(out) + ATP + H2O = ADP + 2 phosphate(in) + H(+). In terms of biological role, part of the ABC transporter complex PstSACB involved in phosphate import. Responsible for energy coupling to the transport system. This Photorhabdus laumondii subsp. laumondii (strain DSM 15139 / CIP 105565 / TT01) (Photorhabdus luminescens subsp. laumondii) protein is Phosphate import ATP-binding protein PstB.